A 677-amino-acid polypeptide reads, in one-letter code: UvrABC system protein B (677 aa).

The Helicase ATP-binding domain occupies 26 to 414 (DNLDAGLAHQ…SGNEVVEQVV (389 aa)). 39–46 (GVTGSGKT) lines the ATP pocket. Residues 92–115 (YYDYYQPEAYVPTTDTFIEKDASI) carry the Beta-hairpin motif. The Helicase C-terminal domain occupies 432 to 598 (QVDDLMSEIR…GLNKDITDVM (167 aa)). The region spanning 637–672 (MKEIDAKEKEMYKAAQNLEFEQAGKLRDEVAELREQ) is the UVR domain.

Belongs to the UvrB family. As to quaternary structure, forms a heterotetramer with UvrA during the search for lesions. Interacts with UvrC in an incision complex.

Its subcellular location is the cytoplasm. The UvrABC repair system catalyzes the recognition and processing of DNA lesions. A damage recognition complex composed of 2 UvrA and 2 UvrB subunits scans DNA for abnormalities. Upon binding of the UvrA(2)B(2) complex to a putative damaged site, the DNA wraps around one UvrB monomer. DNA wrap is dependent on ATP binding by UvrB and probably causes local melting of the DNA helix, facilitating insertion of UvrB beta-hairpin between the DNA strands. Then UvrB probes one DNA strand for the presence of a lesion. If a lesion is found the UvrA subunits dissociate and the UvrB-DNA preincision complex is formed. This complex is subsequently bound by UvrC and the second UvrB is released. If no lesion is found, the DNA wraps around the other UvrB subunit that will check the other stand for damage. This chain is UvrABC system protein B, found in Idiomarina loihiensis (strain ATCC BAA-735 / DSM 15497 / L2-TR).